Reading from the N-terminus, the 578-residue chain is XK-related protein 6 (578 aa).

7 consecutive transmembrane segments (helical) span residues 86–106 (WIVL…WLAV), 114–134 (FLWS…VQIL), 253–273 (WLQC…LASY), 307–327 (VLSL…FVVL), 348–368 (WEEV…WFNV), 377–397 (MVAY…LWYA), and 410–430 (LALC…VLYY).

This sequence belongs to the XK family.

The protein resides in the cell membrane. This chain is XK-related protein 6 (xkr6), found in Tetraodon nigroviridis (Spotted green pufferfish).